The sequence spans 153 residues: 3-hydroxyacyl-[acyl-carrier-protein] dehydratase FabZ (153 aa).

His54 is an active-site residue.

Belongs to the thioester dehydratase family. FabZ subfamily.

Its subcellular location is the cytoplasm. The catalysed reaction is a (3R)-hydroxyacyl-[ACP] = a (2E)-enoyl-[ACP] + H2O. In terms of biological role, involved in unsaturated fatty acids biosynthesis. Catalyzes the dehydration of short chain beta-hydroxyacyl-ACPs and long chain saturated and unsaturated beta-hydroxyacyl-ACPs. The polypeptide is 3-hydroxyacyl-[acyl-carrier-protein] dehydratase FabZ (Shewanella frigidimarina (strain NCIMB 400)).